A 276-amino-acid chain; its full sequence is Undecaprenyl-diphosphatase (276 aa).

The next 6 membrane-spanning stretches (helical) occupy residues 43 to 63 (RAMAFNIIIQLAAILAVVWEF), 85 to 105 (GNLLLAFMPAVVLGVLFADLI), 109 to 129 (LFNPITVATALVVGGVIMLWA), 183 to 203 (AATEFSFFLAMPTMVGAAVYS), 214 to 234 (ADLPVFAIGFVTSFIFAMIAV), and 249 to 269 (FAWYRIVFGLLILATWQFGWV).

This sequence belongs to the UppP family.

It localises to the cell inner membrane. The enzyme catalyses di-trans,octa-cis-undecaprenyl diphosphate + H2O = di-trans,octa-cis-undecaprenyl phosphate + phosphate + H(+). Catalyzes the dephosphorylation of undecaprenyl diphosphate (UPP). Confers resistance to bacitracin. The sequence is that of Undecaprenyl-diphosphatase from Pseudomonas putida (strain GB-1).